A 305-amino-acid chain; its full sequence is Uridylate cyclase (305 aa).

Aspartate 58 and aspartate 102 together coordinate Mn(2+).

It belongs to the adenylyl cyclase class-4/guanylyl cyclase family. Pyrimidine cyclase subfamily. In terms of assembly, homodimer. Mn(2+) is required as a cofactor.

It localises to the cytoplasm. It carries out the reaction GTP = 3',5'-cyclic GMP + diphosphate. The enzyme catalyses UTP = 3',5'-cyclic UMP + diphosphate. Its function is as follows. Pycsar (pyrimidine cyclase system for antiphage resistance) provides immunity against bacteriophage. The pyrimidine cyclase (PycC) synthesizes cyclic nucleotides in response to infection; these serve as specific second messenger signals. The signals activate the adjacent effector, leading to bacterial cell death and abortive phage infection. A clade D Pycsar system. The pyrimidine cyclase gene of a two-gene Pycsar system, generates cyclic UMP (cUMP) from UTP as well as cGMP from GTP to a lesser extent, has little to no activity on ATP or CTP. Expression of this and adjacent effector MePycTM (AC A0A1C5G2D0) probably confers resistance to bacteriophage. The genes are probably only expressed in response to bacteriophage infection. This is Uridylate cyclase from Micromonospora echinofusca.